Here is a 59-residue protein sequence, read N- to C-terminus: MEDKYILLSAVETFKSRLEELLMQSAKVQKQTMLRKELASSMNDMASTVQEALNKKKSS.

Component of the inner kinetochore constitutive centromere-associated network (CCAN) (also known as central kinetochore Sim4 complex in fission yeast), which is composed of at least cnl2, cnp3, cnp20, fta1, fta2, fta3, fta4, fta6, fta7, mal2, mhf1, mhf2, mis6, mis15, mis17, sim4 and wip1.

It localises to the nucleus. It is found in the chromosome. The protein localises to the centromere. The protein resides in the kinetochore. Its subcellular location is the cytoplasm. It localises to the cytoskeleton. It is found in the microtubule organizing center. The protein localises to the spindle pole body. Component of the kinetochore, a multiprotein complex that assembles on centromeric DNA and attaches chromosomes to spindle microtubules, mediating chromosome segregation and sister chromatid segregation during meiosis and mitosis. Component of the inner kinetochore constitutive centromere-associated network (CCAN), which serves as a structural platform for outer kinetochore assembly. This Schizosaccharomyces pombe (strain 972 / ATCC 24843) (Fission yeast) protein is Inner kinetochore subunit fta6 (fta6).